A 315-amino-acid chain; its full sequence is Glutathione synthetase (315 aa).

In terms of domain architecture, ATP-grasp spans 125–310 (KLYTAWFADL…ITGMLMDAIE (186 aa)). 151–207 (WEKHGDIIMKPLDGMGGASIFRVKEGDPNIGVIAETLTELGNRYCMAQNYLPAIKDG) lines the ATP pocket. 2 residues coordinate Mg(2+): glutamate 281 and asparagine 283.

This sequence belongs to the prokaryotic GSH synthase family. The cofactor is Mg(2+). It depends on Mn(2+) as a cofactor.

The enzyme catalyses gamma-L-glutamyl-L-cysteine + glycine + ATP = glutathione + ADP + phosphate + H(+). It functions in the pathway sulfur metabolism; glutathione biosynthesis; glutathione from L-cysteine and L-glutamate: step 2/2. This Salmonella typhimurium (strain LT2 / SGSC1412 / ATCC 700720) protein is Glutathione synthetase.